We begin with the raw amino-acid sequence, 247 residues long: Ubiquinone biosynthesis O-methyltransferase (247 aa).

S-adenosyl-L-methionine is bound by residues Arg-45, Gly-65, Asp-86, and Leu-130.

This sequence belongs to the methyltransferase superfamily. UbiG/COQ3 family.

The catalysed reaction is a 3-demethylubiquinol + S-adenosyl-L-methionine = a ubiquinol + S-adenosyl-L-homocysteine + H(+). The enzyme catalyses a 3-(all-trans-polyprenyl)benzene-1,2-diol + S-adenosyl-L-methionine = a 2-methoxy-6-(all-trans-polyprenyl)phenol + S-adenosyl-L-homocysteine + H(+). Its pathway is cofactor biosynthesis; ubiquinone biosynthesis. Its function is as follows. O-methyltransferase that catalyzes the 2 O-methylation steps in the ubiquinone biosynthetic pathway. This is Ubiquinone biosynthesis O-methyltransferase from Alkalilimnicola ehrlichii (strain ATCC BAA-1101 / DSM 17681 / MLHE-1).